We begin with the raw amino-acid sequence, 1288 residues long: VWFA and cache domain-containing protein 1 (1288 aa).

The first 49 residues, 1-49 (MAREPEEEETVRPAAVVRRCPRCPGWPGAPRPPLWLLCLVACWILGAVA), serve as a signal peptide directing secretion. Residues 50–1109 (DADFSILDEA…ITLNMIKSAP (1060 aa)) are Extracellular-facing. N-linked (GlcNAc...) asparagine glycosylation occurs at Asn159. A VWFA domain is found at 242 to 457 (HIVVILDHGA…TTVGRFYTNL (216 aa)). Cache domains follow at residues 467 to 546 (FSLP…SEPP) and 786 to 867 (LTGP…HPTL). Residues 1110–1130 (VGPVAGGIMGCIMVLVLAVYA) form a helical membrane-spanning segment. Residues 1131 to 1288 (YRHQIHRRSH…VTVHTVDAEC (158 aa)) lie on the Cytoplasmic side of the membrane. Disordered stretches follow at residues 1157 to 1176 (NLEN…RGII) and 1187 to 1237 (ERHV…VDVG). Over residues 1159-1174 (ENDRDERDDDSHEDRG) the composition is skewed to basic and acidic residues. Polar residues predominate over residues 1210-1229 (GYSTMSPQEDSENPPCNNDP).

The protein belongs to the calcium channel subunit alpha-2/delta family.

It is found in the membrane. Its function is as follows. May regulate voltage-dependent calcium channels. This is VWFA and cache domain-containing protein 1 (Cachd1) from Mus musculus (Mouse).